Consider the following 308-residue polypeptide: HPr kinase/phosphorylase (308 aa).

Active-site residues include H138 and K159. 153 to 160 (GESGLGKS) serves as a coordination point for ATP. A Mg(2+)-binding site is contributed by S160. D177 acts as the Proton acceptor; for phosphorylation activity. Proton donor; for dephosphorylation activity in catalysis. Positions 201–210 (LEVRGLGLLD) are important for the catalytic mechanism of both phosphorylation and dephosphorylation. E202 lines the Mg(2+) pocket. R243 is an active-site residue. Residues 264–269 (QVAAGR) form an important for the catalytic mechanism of dephosphorylation region.

The protein belongs to the HPrK/P family. Homohexamer. Mg(2+) is required as a cofactor.

The enzyme catalyses [HPr protein]-L-serine + ATP = [HPr protein]-O-phospho-L-serine + ADP + H(+). It catalyses the reaction [HPr protein]-O-phospho-L-serine + phosphate + H(+) = [HPr protein]-L-serine + diphosphate. Its function is as follows. Catalyzes the ATP- as well as the pyrophosphate-dependent phosphorylation of a specific serine residue in HPr, a phosphocarrier protein of the phosphoenolpyruvate-dependent sugar phosphotransferase system (PTS). HprK/P also catalyzes the pyrophosphate-producing, inorganic phosphate-dependent dephosphorylation (phosphorolysis) of seryl-phosphorylated HPr (P-Ser-HPr). In Bordetella bronchiseptica (strain ATCC BAA-588 / NCTC 13252 / RB50) (Alcaligenes bronchisepticus), this protein is HPr kinase/phosphorylase.